The chain runs to 490 residues: Pyridine nucleotide-disulfide oxidoreductase domain-containing protein 1 (490 aa).

Belongs to the class-I pyridine nucleotide-disulfide oxidoreductase family. PYROXD1 subfamily. Requires FAD as cofactor.

Its subcellular location is the nucleus. The protein localises to the cytoplasm. It is found in the myofibril. It localises to the sarcomere. In terms of biological role, probable FAD-dependent oxidoreductase; involved in the cellular oxidative stress response. Required for normal sarcomere structure and muscle fiber integrity. This chain is Pyridine nucleotide-disulfide oxidoreductase domain-containing protein 1 (pyroxd1), found in Danio rerio (Zebrafish).